Consider the following 106-residue polypeptide: UPF0145 protein APJL_0492 (106 aa).

Belongs to the UPF0145 family.

In Actinobacillus pleuropneumoniae serotype 3 (strain JL03), this protein is UPF0145 protein APJL_0492.